The following is a 268-amino-acid chain: tRNA pseudouridine synthase A (268 aa).

Aspartate 52 acts as the Nucleophile in catalysis. Tyrosine 110 is a substrate binding site.

The protein belongs to the tRNA pseudouridine synthase TruA family. In terms of assembly, homodimer.

The catalysed reaction is uridine(38/39/40) in tRNA = pseudouridine(38/39/40) in tRNA. Its function is as follows. Formation of pseudouridine at positions 38, 39 and 40 in the anticodon stem and loop of transfer RNAs. The chain is tRNA pseudouridine synthase A from Prochlorococcus marinus (strain MIT 9215).